The primary structure comprises 38 residues: 4 kDa defensin (38 aa).

3 disulfides stabilise this stretch: Cys-4–Cys-25, Cys-11–Cys-33, and Cys-15–Cys-35.

Belongs to the invertebrate defensin family. Type 2 subfamily.

It localises to the secreted. Its function is as follows. Dual-function peptide with antimicrobial and potassium channel-blocking activities. Shows inhibitory activity against Gram-positive bacteria such as M.luteus, S.aureus, B.subtilis, and M.luteus as well as methicillin-resistant S.aureus (MIC=0.1-20 uM). Does not act on bacteria by disrupting membranes. Also moderately inhibits Kv1.1/KCNA1, Kv1.2/KCNA2, and Kv1.3/KCNA3 potassium channels. Inhibits potassium channels by interacting with the pore region. Does not show hemolytic activity. The chain is 4 kDa defensin from Leiurus hebraeus (Hebrew deathstalker scorpion).